Reading from the N-terminus, the 313-residue chain is Pyrimidine-specific ribonucleoside hydrolase RihB (313 aa).

Catalysis depends on Glu-11, which acts as the Proton acceptor. Ca(2+) is bound by residues Glu-11, Asp-16, and Val-124. 2 residues coordinate substrate: Gln-227 and His-239. Position 240 (Asp-240) interacts with Ca(2+).

It belongs to the IUNH family. RihB subfamily. Homotetramer. The cofactor is Ca(2+).

The catalysed reaction is a pyrimidine ribonucleoside + H2O = a pyrimidine nucleobase + D-ribose. In terms of biological role, hydrolyzes cytidine or uridine to ribose and cytosine or uracil, respectively. Has a clear preference for cytidine over uridine. Strictly specific for ribonucleosides. This chain is Pyrimidine-specific ribonucleoside hydrolase RihB, found in Shigella flexneri serotype 5b (strain 8401).